A 1555-amino-acid polypeptide reads, in one-letter code: Regulating synaptic membrane exocytosis protein 2 (1555 aa).

Residues 1-35 are disordered; sequence MSAPLGPRGRPAPTPAASQPPPQPEMPDLSHLTEE. A compositionally biased stretch (pro residues) spans 10-25; the sequence is RPAPTPAASQPPPQPE. In terms of domain architecture, RabBD spans 26–154; that stretch reads MPDLSHLTEE…TKSGAWFYNS (129 aa). The FYVE-type zinc finger occupies 86-142; that stretch reads KGDAPTCGICHKTKFADGCGHNCSYCQTKFCARCGGRVSLRSNKVMWVCNLCRKQQE. Residues C92, C95, C108, C111, C116, C119, C134, and C137 each contribute to the Zn(2+) site. Residues 154–163 are compositionally biased toward polar residues; sequence SGSNTPQQPD. A disordered region spans residues 154–530; it reads SGSNTPQQPD…STPEYTSCDD (377 aa). The span at 170 to 185 shows a compositional bias: basic and acidic residues; that stretch reads LRSEEAPQEKKAKLHE. The span at 259–268 shows a compositional bias: polar residues; sequence YVPSDSTMPR. Basic and acidic residues-rich tracts occupy residues 287–298, 317–335, 351–370, and 379–403; these read EPDHLNYRDSNR, RDEY…RYRS, EQMR…RHSD, and EDSR…RRAA. The residue at position 369 (S369) is a Phosphoserine. The span at 418–432 shows a compositional bias: polar residues; it reads AQGQSSYPQRTTNHS. The span at 444–461 shows a compositional bias: basic and acidic residues; it reads DRPELRRADSLRKQHHLD. Positions 479 to 490 are enriched in polar residues; sequence RNDSLSSDQSES. Positions 497–506 are enriched in basic residues; that stretch reads RPHKSKKGGK. The 87-residue stretch at 590 to 676 folds into the PDZ domain; sequence DGSVPRDSGA…EPQVELVVSR (87 aa). T611 is modified (phosphothreonine). Residues 682 to 716 are disordered; that stretch reads PRIPDSTHAQLESSSSSFESQKMDRPSISVTSPMS. Phosphoserine is present on residues S713 and S716. A C2 1 domain is found at 743–866; sequence FVPRVQIKLW…ALLDDEPHWY (124 aa). 5 disordered regions span residues 877–913, 935–1145, 1180–1207, 1268–1288, and 1307–1332; these read PLPH…VSDY, STLS…KRNS, YRSG…DVSA, LEKN…TSGK, and KSRS…QRST. The span at 935–953 shows a compositional bias: polar residues; that stretch reads STLSVPEQVMSSNHCSPSG. 2 stretches are compositionally biased toward basic and acidic residues: residues 996-1014 and 1025-1071; these read RMDR…RDSH and QTSE…ERAD. The span at 1092–1114 shows a compositional bias: low complexity; it reads ALSRSHPRTGSVQTSPSSTPVTG. Phosphoserine is present on S1106. 2 stretches are compositionally biased toward basic and acidic residues: residues 1128–1141 and 1180–1190; these read TLER…DSTR and YRSGWDPHRGA. Phosphoserine is present on residues S1200 and S1276. One can recognise a C2 2 domain in the interval 1401-1519; sequence AMGDIQVGMM…ELSNMVIGWF (119 aa). Phosphoserine occurs at positions 1540 and 1543.

In terms of assembly, heterodimer with PCLO. Part of a ternary complex involving PCLO and EPAC2. Interacts with RAB3C, RAB3D and RAB26. Binds RAB3A and RAB3B that have been activated by GTP-binding. Interacts with TSPOAP1 and RIMBP2. Interacts with PPFIA3 and PPFIA4. Interacts via its zinc finger with the first C2 domain of UNC13A. Forms a complex consisting of UNC13A, RIMS2 and RAB3A. As to expression, highly expressed in hippocampus, brain cortex, cerebellum and olfactory bulb. Detected at intermediate levels in midbrain, hindbrain and spinal cord, and at low levels in testis.

The protein resides in the cell membrane. Its subcellular location is the synapse. It localises to the presynaptic cell membrane. In terms of biological role, rab effector involved in exocytosis. May act as scaffold protein. Plays a role in dendrite formation by melanocytes. This Rattus norvegicus (Rat) protein is Regulating synaptic membrane exocytosis protein 2 (Rims2).